Reading from the N-terminus, the 296-residue chain is Indole-3-glycerol phosphate synthase (296 aa).

The protein belongs to the TrpC family.

It catalyses the reaction 1-(2-carboxyphenylamino)-1-deoxy-D-ribulose 5-phosphate + H(+) = (1S,2R)-1-C-(indol-3-yl)glycerol 3-phosphate + CO2 + H2O. It participates in amino-acid biosynthesis; L-tryptophan biosynthesis; L-tryptophan from chorismate: step 4/5. In Microcystis aeruginosa (strain NIES-843 / IAM M-2473), this protein is Indole-3-glycerol phosphate synthase.